A 212-amino-acid polypeptide reads, in one-letter code: MRVRNRKGASELLANNPQYVISNPEECKGKWAEIFGNNNPIHIEVGSGKGRFVTGMAAQNPDINYIGIDIQMTVLSYALDRVLEAGLPNIKLLQVDGSSLTNYFAPAEIDQLYLNFSDPWPKKRHEKRRLTYKSFLDTYKEILPEKGEIHFKTDNRGLFEYSLASFSQYGMVLKQVWLDLHADGLEGNVMTEYEEKFSNKGQVIYRVEAQFQ.

Residues E44, D69, D96, and D118 each coordinate S-adenosyl-L-methionine. D118 is a catalytic residue. Residue K122 participates in substrate binding. The interaction with RNA stretch occupies residues 124–129; the sequence is RHEKRR. Substrate contacts are provided by residues D154 and 191-194; that span reads TEYE.

It belongs to the class I-like SAM-binding methyltransferase superfamily. TrmB family.

It catalyses the reaction guanosine(46) in tRNA + S-adenosyl-L-methionine = N(7)-methylguanosine(46) in tRNA + S-adenosyl-L-homocysteine. Its pathway is tRNA modification; N(7)-methylguanine-tRNA biosynthesis. Its function is as follows. Catalyzes the formation of N(7)-methylguanine at position 46 (m7G46) in tRNA. The polypeptide is tRNA (guanine-N(7)-)-methyltransferase (Streptococcus suis (strain 05ZYH33)).